The primary structure comprises 434 residues: Trigger factor (434 aa).

In terms of domain architecture, PPIase FKBP-type spans 160–245; that stretch reads GDKVKMNFVG…LTEVLAANLP (86 aa).

This sequence belongs to the FKBP-type PPIase family. Tig subfamily.

It localises to the cytoplasm. The catalysed reaction is [protein]-peptidylproline (omega=180) = [protein]-peptidylproline (omega=0). Functionally, involved in protein export. Acts as a chaperone by maintaining the newly synthesized protein in an open conformation. Functions as a peptidyl-prolyl cis-trans isomerase. The polypeptide is Trigger factor (Shewanella sp. (strain ANA-3)).